Here is a 341-residue protein sequence, read N- to C-terminus: Muscleblind-like protein 1 (341 aa).

T6 is modified (phosphothreonine). 4 C3H1-type zinc fingers span residues 13-41 (WLTL…HPSK), 47-73 (NGRV…HPPP), 178-206 (TDRL…HPAD), and 214-240 (DNTV…HPPA).

This sequence belongs to the muscleblind family. Interacts with DDX1 and YBX1. Interacts with HNRNPH1; the interaction in RNA-independent. Interacts with RBPMS; the interaction allows cooperative assembly of RNA-bound stable cell-specific alternative splicing regulatory complexes. As to expression, highly expressed in cardiac and skeletal muscle. Weakly expressed in heart and eye (at protein level).

It localises to the nucleus. The protein resides in the cytoplasm. The protein localises to the cytoplasmic granule. Functionally, mediates pre-mRNA alternative splicing regulation. Acts either as activator or repressor of splicing on specific pre-mRNA targets. Inhibits cardiac troponin-T (TNNT2) pre-mRNA exon inclusion but induces insulin receptor (IR) pre-mRNA exon inclusion in muscle. Antagonizes the alternative splicing activity pattern of CELF proteins. Regulates the TNNT2 exon 5 skipping through competition with U2AF2. Inhibits the formation of the spliceosome A complex on intron 4 of TNNT2 pre-mRNA. Binds to the stem-loop structure within the polypyrimidine tract of TNNT2 intron 4 during spliceosome assembly. Binds to the 5'-YGCU(U/G)Y-3'consensus sequence. Binds to the IR RNA. Binds to CUG triplet repeat expansion in myotonic dystrophy muscle cells by sequestering the target RNAs. Together with RNA binding proteins RBPMS and RBFOX2, activates vascular smooth muscle cells alternative splicing events. Regulates NCOR2 alternative splicing. The polypeptide is Muscleblind-like protein 1 (Mbnl1) (Mus musculus (Mouse)).